The primary structure comprises 452 residues: Bifunctional protein GlmU (452 aa).

The interval 1–225 is pyrophosphorylase; sequence MDVVILAAGL…ENELIGINTR (225 aa). UDP-N-acetyl-alpha-D-glucosamine contacts are provided by residues 6–9, Lys-20, Gln-71, and 76–77; these read LAAG and GT. Asp-99 serves as a coordination point for Mg(2+). Positions 136, 151, 166, and 223 each coordinate UDP-N-acetyl-alpha-D-glucosamine. Asn-223 is a Mg(2+) binding site. Residues 226-246 are linker; the sequence is AELSLAMRYLRDRIVKGWMEK. The tract at residues 247 to 452 is N-acetyltransferase; sequence GITFYDPALV…LGWAKKKRKQ (206 aa). Residues Arg-329 and Lys-347 each coordinate UDP-N-acetyl-alpha-D-glucosamine. Catalysis depends on His-359, which acts as the Proton acceptor. Residues Tyr-362 and Asn-373 each contribute to the UDP-N-acetyl-alpha-D-glucosamine site. Acetyl-CoA contacts are provided by residues Ala-376, 382–383, Ser-401, Ala-419, and Arg-436; that span reads NY.

In the N-terminal section; belongs to the N-acetylglucosamine-1-phosphate uridyltransferase family. This sequence in the C-terminal section; belongs to the transferase hexapeptide repeat family. In terms of assembly, homotrimer. Mg(2+) serves as cofactor.

Its subcellular location is the cytoplasm. The catalysed reaction is alpha-D-glucosamine 1-phosphate + acetyl-CoA = N-acetyl-alpha-D-glucosamine 1-phosphate + CoA + H(+). It catalyses the reaction N-acetyl-alpha-D-glucosamine 1-phosphate + UTP + H(+) = UDP-N-acetyl-alpha-D-glucosamine + diphosphate. The protein operates within nucleotide-sugar biosynthesis; UDP-N-acetyl-alpha-D-glucosamine biosynthesis; N-acetyl-alpha-D-glucosamine 1-phosphate from alpha-D-glucosamine 6-phosphate (route II): step 2/2. It functions in the pathway nucleotide-sugar biosynthesis; UDP-N-acetyl-alpha-D-glucosamine biosynthesis; UDP-N-acetyl-alpha-D-glucosamine from N-acetyl-alpha-D-glucosamine 1-phosphate: step 1/1. Its pathway is bacterial outer membrane biogenesis; LPS lipid A biosynthesis. In terms of biological role, catalyzes the last two sequential reactions in the de novo biosynthetic pathway for UDP-N-acetylglucosamine (UDP-GlcNAc). The C-terminal domain catalyzes the transfer of acetyl group from acetyl coenzyme A to glucosamine-1-phosphate (GlcN-1-P) to produce N-acetylglucosamine-1-phosphate (GlcNAc-1-P), which is converted into UDP-GlcNAc by the transfer of uridine 5-monophosphate (from uridine 5-triphosphate), a reaction catalyzed by the N-terminal domain. The sequence is that of Bifunctional protein GlmU from Thermodesulfovibrio yellowstonii (strain ATCC 51303 / DSM 11347 / YP87).